The sequence spans 365 residues: tRNA/tmRNA (uracil-C(5))-methyltransferase (365 aa).

S-adenosyl-L-methionine contacts are provided by glutamine 189, tyrosine 217, asparagine 222, glutamate 238, and aspartate 298. Cysteine 323 acts as the Nucleophile in catalysis. Glutamate 357 (proton acceptor) is an active-site residue.

Belongs to the class I-like SAM-binding methyltransferase superfamily. RNA M5U methyltransferase family. TrmA subfamily.

It catalyses the reaction uridine(54) in tRNA + S-adenosyl-L-methionine = 5-methyluridine(54) in tRNA + S-adenosyl-L-homocysteine + H(+). The enzyme catalyses uridine(341) in tmRNA + S-adenosyl-L-methionine = 5-methyluridine(341) in tmRNA + S-adenosyl-L-homocysteine + H(+). Its function is as follows. Dual-specificity methyltransferase that catalyzes the formation of 5-methyluridine at position 54 (m5U54) in all tRNAs, and that of position 341 (m5U341) in tmRNA (transfer-mRNA). This is tRNA/tmRNA (uracil-C(5))-methyltransferase from Saccharophagus degradans (strain 2-40 / ATCC 43961 / DSM 17024).